The primary structure comprises 139 residues: Maximins 4/H3 type 5 (139 aa).

The signal sequence occupies residues 1–18; the sequence is MNFKYIFAVSFLIASAYA. Positions 19-43 are excised as a propeptide; that stretch reads RSVQNDEQSLSQRDVLEEESLREIR. The residue at position 70 (asparagine 70) is an Asparagine amide. A propeptide spanning residues 74–118 is cleaved from the precursor; sequence TAEEHEVMKRLEAVMRDLDSLDHPEEASERETRGFNQDEIAKEKR. Isoleucine 138 carries the post-translational modification Isoleucine amide.

This sequence belongs to the bombinin family. As to expression, expressed by the skin glands.

It localises to the secreted. Functionally, maximin-4 shows antibacterial activity against both Gram-positive and Gram-negative bacteria. It also shows antimicrobial activity against the fungus C.albicans, but not against A.flavus nor P.uticale. It has little hemolytic activity. It does not possess a significant cytotoxicity against tumor cell lines. It does not possess a significant anti-HIV activity. Maximin-H3 shows antibacterial activity against both Gram-positive and Gram-negative bacteria. It also shows antimicrobial activity against the fungus C.albicans. Shows strong hemolytic activity. This chain is Maximins 4/H3 type 5, found in Bombina maxima (Giant fire-bellied toad).